Here is a 193-residue protein sequence, read N- to C-terminus: HMG-Y-related protein A (193 aa).

An H15 domain is found at 11–81 (PIPPYPEMIL…LKNNYFRAGA (71 aa)). Residues 75–193 (NYFRAGAPDA…PAVPSETAAA (119 aa)) form a disordered region. Positions 86-92 (PKRGRGR) match the Nuclear localization signal 1 (NLS) motif. DNA-binding regions (a.T hook) lie at residues 87–98 (KRGRGRPPKARD), 113–124 (GRGRGRPPKAKS), 138–149 (PKPRGRPPKKAK), and 173–184 (KRGRGRPPKVRP). Residues 145–149 (PKKAK) carry the Nuclear localization signal 2 (NLS) motif.

The protein belongs to the histone H1/H5 family. Post-translationally, phosphorylated by CDK, this phosphorylation prevents DNA-binding. Motility is increased when hypophosphorylated. In terms of processing, acetylated.

It localises to the nucleus. The protein resides in the nucleolus. Functionally, binds A/T-rich DNA (e.g. present in the storage gamma-zein gene promoter) with a highly dynamic distribution into the nucleus. Probably involved in endosperm development, during cells shift from a mitotic cycle to endoreduplication leading to massive synthesis of storage proteins (zeins) and starch. This is HMG-Y-related protein A from Zea mays (Maize).